Here is a 157-residue protein sequence, read N- to C-terminus: Peptide methionine sulfoxide reductase MsrA (157 aa).

Cys10 is an active-site residue.

Belongs to the MsrA Met sulfoxide reductase family.

It carries out the reaction L-methionyl-[protein] + [thioredoxin]-disulfide + H2O = L-methionyl-(S)-S-oxide-[protein] + [thioredoxin]-dithiol. The enzyme catalyses [thioredoxin]-disulfide + L-methionine + H2O = L-methionine (S)-S-oxide + [thioredoxin]-dithiol. Functionally, has an important function as a repair enzyme for proteins that have been inactivated by oxidation. Catalyzes the reversible oxidation-reduction of methionine sulfoxide in proteins to methionine. The polypeptide is Peptide methionine sulfoxide reductase MsrA (Clostridium perfringens (strain SM101 / Type A)).